The sequence spans 428 residues: Flotillin-2 (428 aa).

The N-myristoyl glycine moiety is linked to residue Gly-2. A lipid anchor (S-palmitoyl cysteine; by ZDHHC5) is attached at Cys-4. Residue Cys-19 is the site of S-palmitoyl cysteine attachment. Cys-20 carries the S-palmitoyl cysteine; by ZDHHC5 lipid modification. Ser-405 bears the Phosphoserine mark.

It belongs to the band 7/mec-2 family. Flotillin subfamily. As to quaternary structure, heterooligomeric complex of flotillin-1 and flotillin-2 and caveolin-1 and caveolin-2. Interacts with ECPAS. Post-translationally, ZDHHC5-catalyzed palmitoylation may be required for the formation of higher-order complexes and for neurite outgrowth in cultured neural stem cells. As to expression, expressed in many tissues, including suprabasal epidermis, hair follicles, heart, lung, thymus, spleen, liver, kidney and brain. Not expressed in skeletal muscle.

It is found in the cell membrane. It localises to the membrane. The protein localises to the caveola. The protein resides in the endosome. Functionally, may act as a scaffolding protein within caveolar membranes, functionally participating in formation of caveolae or caveolae-like vesicles. May be involved in epidermal cell adhesion and epidermal structure and function. This Mus musculus (Mouse) protein is Flotillin-2 (Flot2).